Consider the following 441-residue polypeptide: Cytochrome c biogenesis protein Ccs1 (441 aa).

3 helical membrane-spanning segments follow: residues 19–39, 78–98, and 164–184; these read LKLAIILLLMLALFSAFGTVI, TWWFTTLILLLAVSLFSCTLA, and IGPIIVHASLIIILFGALLGN.

It belongs to the Ccs1/CcsB family. May interact with CcsA.

It localises to the plastid. The protein resides in the chloroplast thylakoid membrane. Its function is as follows. Required during biogenesis of c-type cytochromes (cytochrome c6 and cytochrome f) at the step of heme attachment. The chain is Cytochrome c biogenesis protein Ccs1 from Rhodomonas salina (Cryptomonas salina).